The primary structure comprises 61 residues: Metallothionein-1E (61 aa).

At methionine 1 the chain carries N-acetylmethionine. Positions 1–29 are beta; that stretch reads MDPNCSCATGGSCTCAGSCKCKECKCTSC. Positions 5, 7, 13, 15, 19, 21, 24, 26, 29, 33, 34, 36, 37, 41, 44, 48, 50, 57, 59, and 60 each coordinate a divalent metal cation. The interval 30-61 is alpha; the sequence is KKSCCSCCPVGCAKCAQGCVCKGASEKCSCCA.

It belongs to the metallothionein superfamily. Type 1 family. In terms of assembly, monomer.

Functionally, metallothioneins have a high content of cysteine residues that bind various heavy metals; these proteins are transcriptionally regulated by both heavy metals and glucocorticoids. This is Metallothionein-1E (MT1E) from Homo sapiens (Human).